Here is a 288-residue protein sequence, read N- to C-terminus: Quinate/shikimate dehydrogenase (288 aa).

Residues K71 and D107 each coordinate substrate. NAD(+)-binding positions include 132-135 (AGGA), 155-158 (NRRD), K205, 232-235 (CVYN), and G255.

It belongs to the shikimate dehydrogenase family. Homodimer.

It carries out the reaction L-quinate + NAD(+) = 3-dehydroquinate + NADH + H(+). It catalyses the reaction L-quinate + NADP(+) = 3-dehydroquinate + NADPH + H(+). The catalysed reaction is shikimate + NADP(+) = 3-dehydroshikimate + NADPH + H(+). The enzyme catalyses shikimate + NAD(+) = 3-dehydroshikimate + NADH + H(+). It functions in the pathway metabolic intermediate biosynthesis; chorismate biosynthesis; chorismate from D-erythrose 4-phosphate and phosphoenolpyruvate: step 4/7. In terms of biological role, the actual biological function of YdiB remains unclear, nor is it known whether 3-dehydroshikimate or quinate represents the natural substrate. Catalyzes the reversible NAD-dependent reduction of both 3-dehydroshikimate (DHSA) and 3-dehydroquinate to yield shikimate (SA) and quinate, respectively. It can use both NAD or NADP for catalysis, however it has higher catalytic efficiency with NAD. This is Quinate/shikimate dehydrogenase from Escherichia coli O81 (strain ED1a).